Consider the following 756-residue polypeptide: Catalase-peroxidase (756 aa).

The segment at residues W91–Y244 is a cross-link (tryptophyl-tyrosyl-methioninium (Trp-Tyr) (with M-270)). Catalysis depends on H92, which acts as the Proton acceptor. The tract at residues A198–N230 is disordered. Residues P214–R223 show a composition bias toward basic and acidic residues. The tryptophyl-tyrosyl-methioninium (Tyr-Met) (with W-91) cross-link spans Y244–M270. Heme b is bound at residue H285. The disordered stretch occupies residues K371–A390.

It belongs to the peroxidase family. Peroxidase/catalase subfamily. Homodimer or homotetramer. The cofactor is heme b. Post-translationally, formation of the three residue Trp-Tyr-Met cross-link is important for the catalase, but not the peroxidase activity of the enzyme.

It catalyses the reaction H2O2 + AH2 = A + 2 H2O. It carries out the reaction 2 H2O2 = O2 + 2 H2O. Its function is as follows. Bifunctional enzyme with both catalase and broad-spectrum peroxidase activity. The sequence is that of Catalase-peroxidase from Pseudomonas savastanoi pv. phaseolicola (strain 1448A / Race 6) (Pseudomonas syringae pv. phaseolicola (strain 1448A / Race 6)).